We begin with the raw amino-acid sequence, 872 residues long: Alanine--tRNA ligase (872 aa).

Residues H567, H571, C669, and H673 each contribute to the Zn(2+) site.

Belongs to the class-II aminoacyl-tRNA synthetase family. Zn(2+) serves as cofactor.

The protein localises to the cytoplasm. The catalysed reaction is tRNA(Ala) + L-alanine + ATP = L-alanyl-tRNA(Ala) + AMP + diphosphate. Functionally, catalyzes the attachment of alanine to tRNA(Ala) in a two-step reaction: alanine is first activated by ATP to form Ala-AMP and then transferred to the acceptor end of tRNA(Ala). Also edits incorrectly charged Ser-tRNA(Ala) and Gly-tRNA(Ala) via its editing domain. This is Alanine--tRNA ligase from Streptococcus pyogenes serotype M6 (strain ATCC BAA-946 / MGAS10394).